The sequence spans 219 residues: Proteasome subunit beta 2 (219 aa).

Positions 1–25 (MAEWIAGGLEGPAGRGLDERVVRSG) are cleaved as a propeptide — removed in mature form; by autocatalysis. Thr-26 acts as the Nucleophile in catalysis.

The protein belongs to the peptidase T1B family. The 20S proteasome core is composed of 14 alpha and 14 beta subunits that assemble into four stacked heptameric rings, resulting in a barrel-shaped structure. The two inner rings, each composed of seven catalytic beta subunits, are sandwiched by two outer rings, each composed of seven alpha subunits. The catalytic chamber with the active sites is on the inside of the barrel. Has a gated structure, the ends of the cylinder being occluded by the N-termini of the alpha-subunits. Is capped at one or both ends by the proteasome regulatory ATPase, PAN.

It is found in the cytoplasm. The catalysed reaction is Cleavage of peptide bonds with very broad specificity.. With respect to regulation, the formation of the proteasomal ATPase PAN-20S proteasome complex, via the docking of the C-termini of PAN into the intersubunit pockets in the alpha-rings, triggers opening of the gate for substrate entry. Interconversion between the open-gate and close-gate conformations leads to a dynamic regulation of the 20S proteasome proteolysis activity. In terms of biological role, component of the proteasome core, a large protease complex with broad specificity involved in protein degradation. In Aeropyrum pernix (strain ATCC 700893 / DSM 11879 / JCM 9820 / NBRC 100138 / K1), this protein is Proteasome subunit beta 2.